The following is a 498-amino-acid chain: ATP synthase subunit beta, chloroplastic (498 aa).

An ATP-binding site is contributed by 172 to 179 (GGAGVGKT).

This sequence belongs to the ATPase alpha/beta chains family. F-type ATPases have 2 components, CF(1) - the catalytic core - and CF(0) - the membrane proton channel. CF(1) has five subunits: alpha(3), beta(3), gamma(1), delta(1), epsilon(1). CF(0) has four main subunits: a(1), b(1), b'(1) and c(9-12).

The protein resides in the plastid. It localises to the chloroplast thylakoid membrane. The catalysed reaction is ATP + H2O + 4 H(+)(in) = ADP + phosphate + 5 H(+)(out). Functionally, produces ATP from ADP in the presence of a proton gradient across the membrane. The catalytic sites are hosted primarily by the beta subunits. This Carica papaya (Papaya) protein is ATP synthase subunit beta, chloroplastic.